We begin with the raw amino-acid sequence, 290 residues long: GTPase Era (290 aa).

In terms of domain architecture, Era-type G spans 2–168; it reads KVCIISILGR…IEILKEYAYN (167 aa). The segment at 10-17 is G1; the sequence is GRPNVGKS. 10-17 is a binding site for GTP; it reads GRPNVGKS. The segment at 36–40 is G2; it reads QTTRD. Residues 57-60 are G3; sequence DTPG. Residues 57–61 and 118–121 contribute to the GTP site; these read DTPGI and SKID. The segment at 118 to 121 is G4; it reads SKID. The segment at 147–149 is G5; that stretch reads VSN. Residues 199 to 275 form the KH type-2 domain; it reads LTDELPHSIA…TLNLKVKVSN (77 aa).

This sequence belongs to the TRAFAC class TrmE-Era-EngA-EngB-Septin-like GTPase superfamily. Era GTPase family. Monomer.

The protein localises to the cytoplasm. Its subcellular location is the cell membrane. An essential GTPase that binds both GDP and GTP, with rapid nucleotide exchange. Plays a role in 16S rRNA processing and 30S ribosomal subunit biogenesis and possibly also in cell cycle regulation and energy metabolism. The polypeptide is GTPase Era (Mycoplasmopsis agalactiae (strain NCTC 10123 / CIP 59.7 / PG2) (Mycoplasma agalactiae)).